The sequence spans 130 residues: Small ribosomal subunit protein uS8 (130 aa).

It belongs to the universal ribosomal protein uS8 family. As to quaternary structure, part of the 30S ribosomal subunit. Contacts proteins S5 and S12.

One of the primary rRNA binding proteins, it binds directly to 16S rRNA central domain where it helps coordinate assembly of the platform of the 30S subunit. This is Small ribosomal subunit protein uS8 from Ruegeria sp. (strain TM1040) (Silicibacter sp.).